Reading from the N-terminus, the 158-residue chain is NAD(P)H-quinone oxidoreductase subunit J, chloroplastic (158 aa).

This sequence belongs to the complex I 30 kDa subunit family. In terms of assembly, NDH is composed of at least 16 different subunits, 5 of which are encoded in the nucleus.

The protein localises to the plastid. It is found in the chloroplast thylakoid membrane. It catalyses the reaction a plastoquinone + NADH + (n+1) H(+)(in) = a plastoquinol + NAD(+) + n H(+)(out). The catalysed reaction is a plastoquinone + NADPH + (n+1) H(+)(in) = a plastoquinol + NADP(+) + n H(+)(out). Functionally, NDH shuttles electrons from NAD(P)H:plastoquinone, via FMN and iron-sulfur (Fe-S) centers, to quinones in the photosynthetic chain and possibly in a chloroplast respiratory chain. The immediate electron acceptor for the enzyme in this species is believed to be plastoquinone. Couples the redox reaction to proton translocation, and thus conserves the redox energy in a proton gradient. This Ranunculus macranthus (Large buttercup) protein is NAD(P)H-quinone oxidoreductase subunit J, chloroplastic.